Reading from the N-terminus, the 380-residue chain is Gap junction gamma-1 protein (380 aa).

The Cytoplasmic segment spans residues Met1–Lys22. Residues Ile23–Tyr45 traverse the membrane as a helical segment. Topologically, residues Asp46–Arg75 are extracellular. Residues Phe76–Ala95 form a helical membrane-spanning segment. The Cytoplasmic portion of the chain corresponds to Met96–Lys171. A helical membrane pass occupies residues Val172 to Leu194. Topologically, residues Tyr195 to Leu228 are extracellular. Residues Leu229–Leu251 form a helical membrane-spanning segment. At Ser252–Ala380 the chain is on the cytoplasmic side. The segment at Ala337–Ala380 is disordered. The segment covering Glu342–Ser353 has biased composition (low complexity). Residues Asn354–Lys369 are compositionally biased toward polar residues. Positions Gln370–Ala380 are enriched in basic and acidic residues.

This sequence belongs to the connexin family. Gamma-type subfamily. As to quaternary structure, a connexon is composed of a hexamer of connexins.

It is found in the cell membrane. The protein resides in the cell junction. It localises to the gap junction. Its function is as follows. One gap junction consists of a cluster of closely packed pairs of transmembrane channels, the connexons, through which materials of low MW diffuse from one cell to a neighboring cell. Participates in a developmental pathway for formation of the notochord and tail. The polypeptide is Gap junction gamma-1 protein (gjc1) (Danio rerio (Zebrafish)).